A 273-amino-acid chain; its full sequence is HMP-PP phosphatase (273 aa).

The active-site Nucleophile is the aspartate 8. Mg(2+) is bound by residues aspartate 8, aspartate 10, and aspartate 212.

Belongs to the HAD-like hydrolase superfamily. Cof family. It depends on Mg(2+) as a cofactor.

The enzyme catalyses 4-amino-2-methyl-5-(diphosphooxymethyl)pyrimidine + H2O = 4-amino-2-methyl-5-(phosphooxymethyl)pyrimidine + phosphate + H(+). In terms of biological role, catalyzes the hydrolysis of 4-amino-2-methyl-5-hydroxymethylpyrimidine pyrophosphate (HMP-PP) to 4-amino-2-methyl-5-hydroxymethylpyrimidine phosphate (HMP-P). The chain is HMP-PP phosphatase from Yersinia pestis bv. Antiqua (strain Antiqua).